A 713-amino-acid polypeptide reads, in one-letter code: KNR4/SMI1 homolog (713 aa).

Disordered regions lie at residues 18–129, 255–274, 400–457, and 500–713; these read PDRY…VTRD, IFIN…SPVA, RHQM…SKPA, and EPLE…KGKK. Low complexity predominate over residues 22–34; the sequence is ASQQRSSKASQSA. The segment covering 35–65 has biased composition (polar residues); it reads GANSQNRPLYNNDDNQSEMYQASSSYTGGYT. Low complexity-rich tracts occupy residues 66-81 and 88-103; these read NSPS…GAAA and SSRN…SSTS. The segment covering 260–270 has biased composition (polar residues); sequence NAGSPNSSTPG. Residues 400–412 show a composition bias toward basic and acidic residues; that stretch reads RHQMQRREHERRQ. The span at 413 to 429 shows a compositional bias: low complexity; sequence AAAAAQQQQQQQQHHAQ. Composition is skewed to basic and acidic residues over residues 507-605 and 613-662; these read EIKG…EEQK and AKAE…KIDE. Residues 663-686 show a composition bias toward acidic residues; sequence ENGNAEEADEEADDDDEDDEEEGD. Positions 701 to 713 are enriched in basic residues; sequence SKSKKKNKKKGKK.

This sequence belongs to the KNR4/SMI1 family.

This chain is KNR4/SMI1 homolog, found in Yarrowia lipolytica (strain CLIB 122 / E 150) (Yeast).